A 459-amino-acid polypeptide reads, in one-letter code: Elongation factor 1-alpha 4 (459 aa).

Residues 5–242 (KTHINIVVIG…DCIIPPQRPT (238 aa)) enclose the tr-type G domain. A G1 region spans residues 14-21 (GHVDSGKS). Residues 70–74 (GITID) form a G2 region. The segment at 91-94 (DAPG) is G3. Residues 153–156 (NKMD) form a G4 region. Residues 194 to 196 (SGF) are G5. 5-glutamyl glycerylphosphorylethanolamine occurs at positions 301 and 374.

Belongs to the TRAFAC class translation factor GTPase superfamily. Classic translation factor GTPase family. EF-Tu/EF-1A subfamily.

It is found in the cytoplasm. This protein promotes the GTP-dependent binding of aminoacyl-tRNA to the A-site of ribosomes during protein biosynthesis. The chain is Elongation factor 1-alpha 4 (eft-4) from Oscheius tipulae.